An 86-amino-acid polypeptide reads, in one-letter code: MPKDDVIKMEGTITEARRNATFLVELDNGHKILAQISGRMRKNFIRLFPGDRVVVELSIYDLTKGRIVYRKKLDRKGSDEGTGERS.

The S1-like domain maps to 1 to 72 (MPKDDVIKME…TKGRIVYRKK (72 aa)).

It belongs to the IF-1 family. Component of the 30S ribosomal translation pre-initiation complex which assembles on the 30S ribosome in the order IF-2 and IF-3, IF-1 and N-formylmethionyl-tRNA(fMet); mRNA recruitment can occur at any time during PIC assembly.

Its subcellular location is the cytoplasm. Functionally, one of the essential components for the initiation of protein synthesis. Stabilizes the binding of IF-2 and IF-3 on the 30S subunit to which N-formylmethionyl-tRNA(fMet) subsequently binds. Helps modulate mRNA selection, yielding the 30S pre-initiation complex (PIC). Upon addition of the 50S ribosomal subunit IF-1, IF-2 and IF-3 are released leaving the mature 70S translation initiation complex. This Pseudothermotoga lettingae (strain ATCC BAA-301 / DSM 14385 / NBRC 107922 / TMO) (Thermotoga lettingae) protein is Translation initiation factor IF-1.